Consider the following 318-residue polypeptide: Putative S-adenosyl-L-methionine-dependent methyltransferase MMAR_1595 (318 aa).

S-adenosyl-L-methionine is bound by residues Glu132 and 161-162; that span reads DL.

Belongs to the UPF0677 family.

Exhibits S-adenosyl-L-methionine-dependent methyltransferase activity. This chain is Putative S-adenosyl-L-methionine-dependent methyltransferase MMAR_1595, found in Mycobacterium marinum (strain ATCC BAA-535 / M).